Reading from the N-terminus, the 390-residue chain is 3,5-dihydroxybiphenyl synthase (390 aa).

The active site involves C161.

Belongs to the thiolase-like superfamily. Chalcone/stilbene synthases family. In terms of assembly, homodimer.

The enzyme catalyses benzoyl-CoA + 3 malonyl-CoA + 3 H(+) = biphenyl-3,5-diol + 4 CO2 + 4 CoA. Functionally, type III polyketide synthase involved in the biosynthesis of the phytoalexins bisphenyls and dibenzofurans. Can also use salicoyl-CoA and malonyl-CoA to produce a diketide intermediate yielding 4-hydroxycoumarin after cyclization and enolization. Can also use m-hydroxybenzoyl-CoA as substrate, producing m-hydroxybenzoyl diacetic acid lactone as a derailment product. No activity with p-hydroxybenzoyl-CoA, CoA-linked cinnamic acids or acetyl-CoA. In Sorbus aucuparia (European mountain ash), this protein is 3,5-dihydroxybiphenyl synthase (BIS1).